A 348-amino-acid polypeptide reads, in one-letter code: NADH-ubiquinone oxidoreductase chain 2 (348 aa).

Helical transmembrane passes span 13 to 33, 60 to 80, 96 to 116, 124 to 144, 150 to 170, 200 to 220, 241 to 261, 278 to 298, and 325 to 345; these read VITG…WAGL, FLAQ…NNLL, PLAM…HFWV, PLTS…SIMY, INTH…SWGG, TITT…FLTL, LMPL…LTGF, IIPT…MRLI, and LFIP…PLIL.

This sequence belongs to the complex I subunit 2 family. In terms of assembly, core subunit of respiratory chain NADH dehydrogenase (Complex I) which is composed of 45 different subunits. Interacts with TMEM242.

It is found in the mitochondrion inner membrane. It carries out the reaction a ubiquinone + NADH + 5 H(+)(in) = a ubiquinol + NAD(+) + 4 H(+)(out). Core subunit of the mitochondrial membrane respiratory chain NADH dehydrogenase (Complex I) which catalyzes electron transfer from NADH through the respiratory chain, using ubiquinone as an electron acceptor. Essential for the catalytic activity and assembly of complex I. In Papio hamadryas (Hamadryas baboon), this protein is NADH-ubiquinone oxidoreductase chain 2.